The sequence spans 172 residues: Adenine phosphoribosyltransferase (172 aa).

The protein belongs to the purine/pyrimidine phosphoribosyltransferase family. As to quaternary structure, homodimer.

The protein localises to the cytoplasm. The catalysed reaction is AMP + diphosphate = 5-phospho-alpha-D-ribose 1-diphosphate + adenine. It functions in the pathway purine metabolism; AMP biosynthesis via salvage pathway; AMP from adenine: step 1/1. Its function is as follows. Catalyzes a salvage reaction resulting in the formation of AMP, that is energically less costly than de novo synthesis. This Parasynechococcus marenigrum (strain WH8102) protein is Adenine phosphoribosyltransferase.